Consider the following 403-residue polypeptide: Argininosuccinate synthase (403 aa).

ATP-binding positions include 12–20 and Ala-39; that span reads AYSGGLDTS. L-citrulline is bound by residues Tyr-90 and Ser-95. Gly-120 is a binding site for ATP. L-aspartate is bound by residues Thr-122, Asn-126, and Asp-127. Asn-126 provides a ligand contact to L-citrulline. Positions 130, 182, 191, 267, and 279 each coordinate L-citrulline.

It belongs to the argininosuccinate synthase family. Type 1 subfamily. In terms of assembly, homotetramer.

The protein resides in the cytoplasm. It carries out the reaction L-citrulline + L-aspartate + ATP = 2-(N(omega)-L-arginino)succinate + AMP + diphosphate + H(+). It participates in amino-acid biosynthesis; L-arginine biosynthesis; L-arginine from L-ornithine and carbamoyl phosphate: step 2/3. The polypeptide is Argininosuccinate synthase (Vesicomyosocius okutanii subsp. Calyptogena okutanii (strain HA)).